Reading from the N-terminus, the 938-residue chain is ATP-dependent 6-phosphofructokinase subunit beta (938 aa).

The segment at 1–552 (MTQSLPLLNG…HLDNFMAINS (552 aa)) is N-terminal catalytic PFK domain 1. Residues G185, 249 to 250 (RC), and 279 to 282 (GDGS) each bind ATP. A Mg(2+)-binding site is contributed by D280. Beta-D-fructose 6-phosphate is bound by residues 325–327 (SID), R362, 369–371 (MGR), E426, R454, and 460–463 (HVQR). The active-site Proton acceptor is the D327. Positions 553-566 (ADHIEPKLPEHTHM) are interdomain linker. The segment at 567 to 938 (KIAIVNVGAP…ADHLVGRKKL (372 aa)) is C-terminal regulatory PFK domain 2. Beta-D-fructose 2,6-bisphosphate-binding positions include R637, 695-699 (TLSNN), R733, 740-742 (QGG), K826, 832-835 (HVQQ), and R915.

It belongs to the phosphofructokinase type A (PFKA) family. ATP-dependent PFK group I subfamily. Eukaryotic two domain clade 'E' sub-subfamily. Heterooctamer of 4 alpha and 4 beta chains. Mg(2+) serves as cofactor.

The protein localises to the cytoplasm. The enzyme catalyses beta-D-fructose 6-phosphate + ATP = beta-D-fructose 1,6-bisphosphate + ADP + H(+). It participates in carbohydrate degradation; glycolysis; D-glyceraldehyde 3-phosphate and glycerone phosphate from D-glucose: step 3/4. With respect to regulation, allosterically activated by ADP, AMP, or fructose 2,6-bisphosphate, and allosterically inhibited by ATP or citrate. In terms of biological role, catalyzes the phosphorylation of D-fructose 6-phosphate to fructose 1,6-bisphosphate by ATP, the first committing step of glycolysis. This Kluyveromyces lactis (strain ATCC 8585 / CBS 2359 / DSM 70799 / NBRC 1267 / NRRL Y-1140 / WM37) (Yeast) protein is ATP-dependent 6-phosphofructokinase subunit beta (PFK2).